Consider the following 396-residue polypeptide: L-lactate dehydrogenase (396 aa).

The 380-residue stretch at M1–G380 folds into the FMN hydroxy acid dehydrogenase domain. Y24 contributes to the substrate binding site. FMN-binding residues include S106 and Q127. Position 129 (Y129) interacts with substrate. T155 lines the FMN pocket. R164 contacts substrate. K251 serves as a coordination point for FMN. H275 acts as the Proton acceptor in catalysis. R278 is a binding site for substrate. Position 306–330 (D306–R330) interacts with FMN.

This sequence belongs to the FMN-dependent alpha-hydroxy acid dehydrogenase family. Requires FMN as cofactor.

Its subcellular location is the cell inner membrane. The enzyme catalyses (S)-lactate + A = pyruvate + AH2. Its function is as follows. Catalyzes the conversion of L-lactate to pyruvate. Is coupled to the respiratory chain. In Shigella flexneri serotype 5b (strain 8401), this protein is L-lactate dehydrogenase.